Consider the following 493-residue polypeptide: Glutamyl-tRNA(Gln) amidotransferase subunit A (493 aa).

Active-site charge relay system residues include K78 and S158. The active-site Acyl-ester intermediate is the S182.

The protein belongs to the amidase family. GatA subfamily. In terms of assembly, heterotrimer of A, B and C subunits.

The enzyme catalyses L-glutamyl-tRNA(Gln) + L-glutamine + ATP + H2O = L-glutaminyl-tRNA(Gln) + L-glutamate + ADP + phosphate + H(+). In terms of biological role, allows the formation of correctly charged Gln-tRNA(Gln) through the transamidation of misacylated Glu-tRNA(Gln) in organisms which lack glutaminyl-tRNA synthetase. The reaction takes place in the presence of glutamine and ATP through an activated gamma-phospho-Glu-tRNA(Gln). The protein is Glutamyl-tRNA(Gln) amidotransferase subunit A of Methylorubrum extorquens (strain PA1) (Methylobacterium extorquens).